A 103-amino-acid chain; its full sequence is Flagellar hook-basal body complex protein FliE (103 aa).

Belongs to the FliE family.

The protein resides in the bacterial flagellum basal body. The polypeptide is Flagellar hook-basal body complex protein FliE (Yersinia enterocolitica serotype O:8 / biotype 1B (strain NCTC 13174 / 8081)).